Reading from the N-terminus, the 124-residue chain is Small ribosomal subunit protein uS12 (124 aa).

The segment at 1-28 (MPTINQLVRKGRTPKVSKTKAPALKGSP) is disordered. Over residues 9–18 (RKGRTPKVSK) the composition is skewed to basic residues. D89 is subject to 3-methylthioaspartic acid.

Belongs to the universal ribosomal protein uS12 family. Part of the 30S ribosomal subunit. Contacts proteins S8 and S17. May interact with IF1 in the 30S initiation complex.

With S4 and S5 plays an important role in translational accuracy. Its function is as follows. Interacts with and stabilizes bases of the 16S rRNA that are involved in tRNA selection in the A site and with the mRNA backbone. Located at the interface of the 30S and 50S subunits, it traverses the body of the 30S subunit contacting proteins on the other side and probably holding the rRNA structure together. The combined cluster of proteins S8, S12 and S17 appears to hold together the shoulder and platform of the 30S subunit. The chain is Small ribosomal subunit protein uS12 from Paenarthrobacter aurescens (strain TC1).